A 1350-amino-acid chain; its full sequence is Protein transport protein SEC16A homolog (1350 aa).

Disordered stretches follow at residues 26 to 45 (YTPT…GSDS), 73 to 97 (LGND…SIAP), 964 to 1063 (MPPP…TRKV), 1118 to 1216 (AEEA…KPPI), and 1235 to 1350 (QVME…EVEL). The segment covering 35–45 (KELKFDDGSDS) has biased composition (basic and acidic residues). Phosphoserine is present on serine 43. A compositionally biased stretch (polar residues) spans 970 to 1002 (HSTTGNPQVNEYQHQQQEAAKLSYSQSANTMSS). Positions 1150 to 1168 (SPSSGSWSSGSPTPSENSP) are enriched in low complexity. Polar residues-rich tracts occupy residues 1195-1210 (TYNQ…PPVQ) and 1289-1316 (RSGS…GSVN). A compositionally biased stretch (low complexity) spans 1317 to 1343 (SSSFMSPTSASTFRPSPLNSSSSSLGE).

The protein belongs to the SEC16 family. As to quaternary structure, interacts with SEC13A, SEC13B and SEC31A.

The protein resides in the golgi apparatus. It is found in the golgi stack. Its subcellular location is the endoplasmic reticulum. Required for efficient protein export from the endoplasmic reticulum (ER) to the Golgi by regulating COPII coat dynamics at the ER. Functions as a scaffold and regulator of COPII coat assembly at ER exit sites. The chain is Protein transport protein SEC16A homolog from Arabidopsis thaliana (Mouse-ear cress).